Here is a 1356-residue protein sequence, read N- to C-terminus: RHO1 GDP-GTP exchange protein 2 (1356 aa).

Ser2 is subject to N-acetylserine. Disordered regions lie at residues 74 to 94 (RRSG…EMKG) and 109 to 175 (EVPD…PRNE). At Ser76 the chain carries Phosphoserine. Polar residues-rich tracts occupy residues 109-125 (EVPD…TPVS) and 147-157 (HIYSTSNSASR). The residue at position 193 (Ser193) is a Phosphoserine. Disordered regions lie at residues 202–291 (LKKQ…RSMS), 303–362 (SFQS…SSSN), 383–409 (SVSG…VMSA), 531–571 (GNHS…SQQK), and 626–645 (NISM…TSSV). The span at 204-221 (KQSSFSTGSASTTPTQAR) shows a compositional bias: polar residues. Residue Ser223 is modified to Phosphoserine. Residues 235 to 244 (SSKDLHEQHQ) are compositionally biased toward basic and acidic residues. A compositionally biased stretch (low complexity) spans 250-265 (QHNNINNHNNNNTNNN). Over residues 271-281 (VGSSNSNYPQH) the composition is skewed to polar residues. The segment covering 282 to 291 (SHSISSRSMS) has biased composition (low complexity). Positions 303–325 (SFQSKTSNSRKATQKYDITSNPF) are enriched in polar residues. The segment covering 329–338 (HHHHHHHHSS) has biased composition (basic residues). Composition is skewed to low complexity over residues 339–362 (NSHS…SSSN) and 383–401 (SVSG…TPLS). 2 positions are modified to phosphoserine: Ser566 and Ser628. The DH domain occupies 659–846 (KRQEAIYEVY…RDFMKRIDQA (188 aa)). The 303-residue stretch at 1034-1336 (TNKINSVTSC…RLLQTSTQEI (303 aa)) folds into the CNH domain.

Its function is as follows. Stimulates the exchange of RHO1 GDP-bound form into GTP-bound form. The sequence is that of RHO1 GDP-GTP exchange protein 2 (ROM2) from Saccharomyces cerevisiae (strain ATCC 204508 / S288c) (Baker's yeast).